The sequence spans 406 residues: Protein translocase subunit SecD (406 aa).

Transmembrane regions (helical) follow at residues 8–28 (IVILILVVVIPAILIFRNPIN), 240–260 (MAAMIALVLVSLFMLAVYRVA), 262–282 (FVADLALCVFGILTAGLMCAI), 289–309 (PGIAGFILSLGMAVDANVIIF), 334–354 (FPAILDGNITTLLITMVLFFF), and 361–381 (GFAVILTIGVLVSMFTAIFIT).

This sequence belongs to the SecD/SecF family. SecD subfamily. As to quaternary structure, forms a complex with SecF. Part of the essential Sec protein translocation apparatus which comprises SecA, SecYEG and auxiliary proteins SecDF. Other proteins may also be involved.

Its subcellular location is the cell inner membrane. Functionally, part of the Sec protein translocase complex. Interacts with the SecYEG preprotein conducting channel. SecDF uses the proton motive force (PMF) to complete protein translocation after the ATP-dependent function of SecA. The protein is Protein translocase subunit SecD of Sebaldella termitidis (strain ATCC 33386 / NCTC 11300).